Reading from the N-terminus, the 890-residue chain is UPF0182 protein Ppro_2689 (890 aa).

7 helical membrane-spanning segments follow: residues 6–26, 50–70, 102–122, 157–177, 200–220, 244–264, and 266–286; these read FILI…LLAF, AGSG…NLLL, LGIP…AMQW, TITA…VLVY, LAIL…LDCF, TYRI…IGLW, and GAWR…VIGI.

It belongs to the UPF0182 family.

It localises to the cell membrane. In Pelobacter propionicus (strain DSM 2379 / NBRC 103807 / OttBd1), this protein is UPF0182 protein Ppro_2689.